A 177-amino-acid chain; its full sequence is ATP synthase subunit delta (177 aa).

Belongs to the ATPase delta chain family. In terms of assembly, F-type ATPases have 2 components, F(1) - the catalytic core - and F(0) - the membrane proton channel. F(1) has five subunits: alpha(3), beta(3), gamma(1), delta(1), epsilon(1). F(0) has three main subunits: a(1), b(2) and c(10-14). The alpha and beta chains form an alternating ring which encloses part of the gamma chain. F(1) is attached to F(0) by a central stalk formed by the gamma and epsilon chains, while a peripheral stalk is formed by the delta and b chains.

It is found in the cell inner membrane. F(1)F(0) ATP synthase produces ATP from ADP in the presence of a proton or sodium gradient. F-type ATPases consist of two structural domains, F(1) containing the extramembraneous catalytic core and F(0) containing the membrane proton channel, linked together by a central stalk and a peripheral stalk. During catalysis, ATP synthesis in the catalytic domain of F(1) is coupled via a rotary mechanism of the central stalk subunits to proton translocation. Its function is as follows. This protein is part of the stalk that links CF(0) to CF(1). It either transmits conformational changes from CF(0) to CF(1) or is implicated in proton conduction. The protein is ATP synthase subunit delta of Shewanella frigidimarina (strain NCIMB 400).